The chain runs to 260 residues: HTH-type transcriptional repressor NanR (260 aa).

The HTH gntR-type domain maps to 27–95 (KKLSEMVEEE…NGERARVSRP (69 aa)). Residues 55–74 (ERELMAFFNVGRPSVREALA) constitute a DNA-binding region (H-T-H motif).

Belongs to the NanR family.

In terms of biological role, transcriptional repressor that controls expression of the genes required for the catabolism of sialic acids. In Citrobacter rodentium (strain ICC168) (Citrobacter freundii biotype 4280), this protein is HTH-type transcriptional repressor NanR.